A 379-amino-acid chain; its full sequence is Queuine tRNA-ribosyltransferase (379 aa).

Asp94 serves as the catalytic Proton acceptor. Residues 94–98 (DSGGF), Asp148, Gln191, and Gly218 contribute to the substrate site. The segment at 249 to 255 (GVGSPDA) is RNA binding. Catalysis depends on Asp268, which acts as the Nucleophile. Residues 273–277 (TRIAR) are RNA binding; important for wobble base 34 recognition. Zn(2+) contacts are provided by Cys306, Cys308, Cys311, and His337.

This sequence belongs to the queuine tRNA-ribosyltransferase family. In terms of assembly, homodimer. Within each dimer, one monomer is responsible for RNA recognition and catalysis, while the other monomer binds to the replacement base PreQ1. Zn(2+) serves as cofactor.

It catalyses the reaction 7-aminomethyl-7-carbaguanine + guanosine(34) in tRNA = 7-aminomethyl-7-carbaguanosine(34) in tRNA + guanine. The protein operates within tRNA modification; tRNA-queuosine biosynthesis. Its function is as follows. Catalyzes the base-exchange of a guanine (G) residue with the queuine precursor 7-aminomethyl-7-deazaguanine (PreQ1) at position 34 (anticodon wobble position) in tRNAs with GU(N) anticodons (tRNA-Asp, -Asn, -His and -Tyr). Catalysis occurs through a double-displacement mechanism. The nucleophile active site attacks the C1' of nucleotide 34 to detach the guanine base from the RNA, forming a covalent enzyme-RNA intermediate. The proton acceptor active site deprotonates the incoming PreQ1, allowing a nucleophilic attack on the C1' of the ribose to form the product. After dissociation, two additional enzymatic reactions on the tRNA convert PreQ1 to queuine (Q), resulting in the hypermodified nucleoside queuosine (7-(((4,5-cis-dihydroxy-2-cyclopenten-1-yl)amino)methyl)-7-deazaguanosine). In Staphylococcus haemolyticus (strain JCSC1435), this protein is Queuine tRNA-ribosyltransferase.